A 1226-amino-acid polypeptide reads, in one-letter code: Integrin alpha pat-2 (1226 aa).

Positions 1–25 (MREGSFPRRIGLLLGLLGLLAGVAT) are cleaved as a signal peptide. The Extracellular segment spans residues 26 to 1154 (FNIDTKNVVV…IASEEGRDLP (1129 aa)). FG-GAP repeat units lie at residues 27–94 (NIDT…TCRE), 108–171 (NGSH…NAEE), 178–233 (EPAR…TDRP), 234–290 (NTEY…MMIN), 291–345 (LTDE…KPQY), 362–421 (GKQI…GVRE), and 425–488 (QKIE…PESA). 3 N-linked (GlcNAc...) asparagine glycosylation sites follow: asparagine 108, asparagine 228, and asparagine 290. Residue asparagine 608 is glycosylated (N-linked (GlcNAc...) asparagine). The short motif at 620 to 622 (RGD) is the Cell attachment site element. Asparagine 679 is a glycosylation site (N-linked (GlcNAc...) asparagine). The disordered stretch occupies residues 709 to 733 (SVGGDGSKSAPACSPTSDEPDSDGK). Asparagine 775 and asparagine 819 each carry an N-linked (GlcNAc...) asparagine glycan. Disordered regions lie at residues 898–958 (LRIT…HVYE) and 982–1040 (DYEY…ARFS). Residues 920-931 (REEDDESYEDET) are compositionally biased toward acidic residues. A compositionally biased stretch (low complexity) spans 932–951 (TTQSQSTRHQSTQHQTHHQS). Over residues 985 to 1005 (YIPDDQEYDGDDFEEEDDEDF) the composition is skewed to acidic residues. A compositionally biased stretch (basic residues) spans 1010-1026 (SKRVKRNPTPKKKKKGG). Residues 1027 to 1040 (EHRGEPRSDKARFS) are compositionally biased toward basic and acidic residues. A helical transmembrane segment spans residues 1155–1177 (WWLYLLAILIGLAILILLILLLW). Over 1178-1226 (RCGFFKRNRPPTEHAELRADRQPNAQYADSQSRYTSQDQYNQGRHGQML) the chain is Cytoplasmic. The segment at 1191–1226 (HAELRADRQPNAQYADSQSRYTSQDQYNQGRHGQML) is disordered. A compositionally biased stretch (polar residues) spans 1200 to 1226 (PNAQYADSQSRYTSQDQYNQGRHGQML).

The protein belongs to the integrin alpha chain family. In terms of assembly, heterodimer of an alpha and a beta subunit. Interacts with beta subunit pat-3. Interacts with dep-1. Component of an integrin containing attachment complex, composed of at least pat-2, pat-3, pat-4, pat-6, unc-52, unc-97 and unc-112. In terms of tissue distribution, expressed in body-wall muscle cells, distal tip cells, and vulval tissue.

The protein localises to the membrane. Required for muscle development probably through the regulation of the actin-myosin cytoskeleton. Component of an integrin containing attachment complex, which is required for muscle maintenance. During the formation of neuromuscular junctions at the larval stage, negatively regulates membrane protrusion from body wall muscles, probably through lamins such as epi-1, lam-2 and unc-52. Required for distal tip cell migration and dorsal pathfinding. Required for egg-laying. May play a role in cell motility and cell-cell interactions. Plays a role in vulval development. Probably within the alpha pat-2/beta pat-3 integrin receptor complex, plays a role in the negative regulation of let-23 signaling and vulval induction. This is probably partly by restricting the mobility of the let-23 receptor on the plasma membrane of vulval cells which thereby attenuates let-23 signaling. The sequence is that of Integrin alpha pat-2 from Caenorhabditis elegans.